A 313-amino-acid polypeptide reads, in one-letter code: Beta-lactamase BRO-1 (313 aa).

The N-terminal stretch at 1 to 25 is a signal peptide; that stretch reads MQRRHFLQKTLLALPIIFSGNLLTG. Residue cysteine 26 is the site of N-palmitoyl cysteine attachment. Cysteine 26 carries S-diacylglycerol cysteine lipidation. The Acyl-ester intermediate role is filled by serine 90. 255–257 contacts substrate; that stretch reads KTG.

Belongs to the class-A beta-lactamase family.

Its subcellular location is the cell membrane. It carries out the reaction a beta-lactam + H2O = a substituted beta-amino acid. The sequence is that of Beta-lactamase BRO-1 (bla) from Moraxella catarrhalis (Branhamella catarrhalis).